Here is a 574-residue protein sequence, read N- to C-terminus: MSDKPLTDVTFSSFDLHPALVAGLESAGFTRCTPIQALTLPVALPGGDVAGQAQTGTGKTLAFLVAVMNRLLNRPALADRKPEDPRALILAPTRELAIQIHKDAVKFGADLGLRFALVYGGVDYDKQRELLQQGVDVIIATPGRLIDYVKQHKVVSLHACEICVLDEADRMFDLGFIKDIRFLLRRMPERGTRQTLLFSATLSHRVLELAYEHMNEPEKLVVETETITAARVRQRIYFPSDDEKQTLLLGLLSRSEGARTMVFVNTKAFVERVARTLERHGYRVGVLSGDVPQKKRESLLNRFQKGQLEILVATDVAARGLHIDGVKYVYNYDLPFDAEDYVHRIGRTARLGEEGDAISFACERYAMSLPDIEAYIEQKIPVEPVTSELLTPLPRAARVPVEGEEADDEAGDSVGTIFREAREQRAAEEQRRGGGRSGPGGGSRSGSGGGRRDGASAGADGKPRPRRKPRVEGEAPAAAAQTEKPVVAAAAAQAPSVGMADAERAPRKRRRRRNGRPVEGAEPAVASTPIAAPAAPRKPTQVVATPVRAANKSSGSPSLLGRIGRRLRSLVSGN.

The Q motif signature appears at 9-37; it reads VTFSSFDLHPALVAGLESAGFTRCTPIQA. The region spanning 40–220 is the Helicase ATP-binding domain; that stretch reads LPVALPGGDV…YEHMNEPEKL (181 aa). 53–60 contributes to the ATP binding site; the sequence is AQTGTGKT. The DEAD box motif lies at 166 to 169; sequence DEAD. Residues 231-393 form the Helicase C-terminal domain; that stretch reads RVRQRIYFPS…PVTSELLTPL (163 aa). Over residues 423 to 432 the composition is skewed to basic and acidic residues; the sequence is EQRAAEEQRR. The disordered stretch occupies residues 423–574; the sequence is EQRAAEEQRR…RRLRSLVSGN (152 aa). Gly residues predominate over residues 435-449; sequence GRSGPGGGSRSGSGG. The segment covering 477–495 has biased composition (low complexity); that stretch reads AAAAQTEKPVVAAAAAQAP. Positions 506–515 are enriched in basic residues; the sequence is PRKRRRRRNG. Composition is skewed to low complexity over residues 523–535 and 553–562; these read PAVA…APAA and SSGSPSLLGR.

This sequence belongs to the DEAD box helicase family. RhlB subfamily. Component of the RNA degradosome, which is a multiprotein complex involved in RNA processing and mRNA degradation.

The protein resides in the cytoplasm. The enzyme catalyses ATP + H2O = ADP + phosphate + H(+). Its function is as follows. DEAD-box RNA helicase involved in RNA degradation. Has RNA-dependent ATPase activity and unwinds double-stranded RNA. This is ATP-dependent RNA helicase RhlB from Xanthomonas oryzae pv. oryzae (strain KACC10331 / KXO85).